The following is a 494-amino-acid chain: Ribosomal lysine N-methyltransferase 4 (494 aa).

The region spanning 25-265 (PKIEIKDLCC…KNEQVYNIYG (241 aa)) is the SET domain. Residue Y264 participates in S-adenosyl-L-methionine binding.

The protein belongs to the class V-like SAM-binding methyltransferase superfamily. Histone-lysine methyltransferase family. SETD6 subfamily.

The protein resides in the nucleus. S-adenosyl-L-methionine-dependent protein-lysine N-methyltransferase that monomethylates 60S ribosomal protein L42 (RPL42A and RPL42B) at 'Lys-55'. This chain is Ribosomal lysine N-methyltransferase 4, found in Saccharomyces cerevisiae (strain ATCC 204508 / S288c) (Baker's yeast).